The sequence spans 210 residues: Shikimate kinase (210 aa).

34–39 contacts ATP; the sequence is GVGKSV. A Mg(2+)-binding site is contributed by S38. Substrate-binding residues include D56, R80, and G102. R140 is a binding site for ATP. Residue R159 participates in substrate binding.

Belongs to the shikimate kinase family. Monomer. It depends on Mg(2+) as a cofactor.

It is found in the cytoplasm. The enzyme catalyses shikimate + ATP = 3-phosphoshikimate + ADP + H(+). It participates in metabolic intermediate biosynthesis; chorismate biosynthesis; chorismate from D-erythrose 4-phosphate and phosphoenolpyruvate: step 5/7. Functionally, catalyzes the specific phosphorylation of the 3-hydroxyl group of shikimic acid using ATP as a cosubstrate. The polypeptide is Shikimate kinase (Bartonella henselae (strain ATCC 49882 / DSM 28221 / CCUG 30454 / Houston 1) (Rochalimaea henselae)).